The primary structure comprises 367 residues: S-adenosylmethionine decarboxylase proenzyme 3 (367 aa).

Active-site residues include glutamate 9 and glutamate 12. Catalysis depends on serine 69, which acts as the Schiff-base intermediate with substrate; via pyruvic acid. The residue at position 69 (serine 69) is a Pyruvic acid (Ser); by autocatalysis. The Proton donor; for catalytic activity role is filled by cysteine 83. Catalysis depends on proton acceptor; for processing activity residues serine 234 and histidine 247.

Belongs to the eukaryotic AdoMetDC family. It depends on pyruvate as a cofactor. Post-translationally, is synthesized initially as an inactive proenzyme. Formation of the active enzyme involves a self-maturation process in which the active site pyruvoyl group is generated from an internal serine residue via an autocatalytic post-translational modification. Two non-identical subunits are generated from the proenzyme in this reaction, and the pyruvate is formed at the N-terminus of the alpha chain, which is derived from the carboxyl end of the proenzyme. The post-translation cleavage follows an unusual pathway, termed non-hydrolytic serinolysis, in which the side chain hydroxyl group of the serine supplies its oxygen atom to form the C-terminus of the beta chain, while the remainder of the serine residue undergoes an oxidative deamination to produce ammonia and the pyruvoyl group blocking the N-terminus of the alpha chain.

The enzyme catalyses S-adenosyl-L-methionine + H(+) = S-adenosyl 3-(methylsulfanyl)propylamine + CO2. The protein operates within amine and polyamine biosynthesis; S-adenosylmethioninamine biosynthesis; S-adenosylmethioninamine from S-adenosyl-L-methionine: step 1/1. The polypeptide is S-adenosylmethionine decarboxylase proenzyme 3 (SAMDC3) (Brassica juncea (Indian mustard)).